We begin with the raw amino-acid sequence, 132 residues long: Small ribosomal subunit protein uS8 (132 aa).

This sequence belongs to the universal ribosomal protein uS8 family. In terms of assembly, part of the 30S ribosomal subunit. Contacts proteins S5 and S12.

One of the primary rRNA binding proteins, it binds directly to 16S rRNA central domain where it helps coordinate assembly of the platform of the 30S subunit. The protein is Small ribosomal subunit protein uS8 of Corynebacterium jeikeium (strain K411).